The sequence spans 341 residues: L-threonine 3-dehydrogenase (341 aa).

Cys38 contacts Zn(2+). Catalysis depends on charge relay system residues Thr40 and His43. Zn(2+) contacts are provided by His63, Glu64, Cys93, Cys96, Cys99, and Cys107. Residues Ile175, Asp195, Arg200, 262–264 (LGI), and 286–287 (IY) contribute to the NAD(+) site.

Belongs to the zinc-containing alcohol dehydrogenase family. In terms of assembly, homotetramer. It depends on Zn(2+) as a cofactor.

It localises to the cytoplasm. The enzyme catalyses L-threonine + NAD(+) = (2S)-2-amino-3-oxobutanoate + NADH + H(+). It participates in amino-acid degradation; L-threonine degradation via oxydo-reductase pathway; glycine from L-threonine: step 1/2. Its function is as follows. Catalyzes the NAD(+)-dependent oxidation of L-threonine to 2-amino-3-ketobutyrate. The polypeptide is L-threonine 3-dehydrogenase (Idiomarina loihiensis (strain ATCC BAA-735 / DSM 15497 / L2-TR)).